A 122-amino-acid chain; its full sequence is LYR motif-containing protein 1 (122 aa).

The protein belongs to the complex I LYR family. In terms of tissue distribution, high levels in adipose tissue.

The protein resides in the nucleus. In terms of biological role, may promote cell proliferation and inhibition of apoptosis of preadipocytes. In Homo sapiens (Human), this protein is LYR motif-containing protein 1 (LYRM1).